The sequence spans 33 residues: MPTITIISYFGLLLASIIFTLVLFISLSKIQLI.

Residues 4–24 form a helical membrane-spanning segment; the sequence is ITIISYFGLLLASIIFTLVLF.

Belongs to the PetL family. The 4 large subunits of the cytochrome b6-f complex are cytochrome b6, subunit IV (17 kDa polypeptide, PetD), cytochrome f and the Rieske protein, while the 4 small subunits are PetG, PetL, PetM and PetN. The complex functions as a dimer.

The protein localises to the plastid. It localises to the chloroplast thylakoid membrane. In terms of biological role, component of the cytochrome b6-f complex, which mediates electron transfer between photosystem II (PSII) and photosystem I (PSI), cyclic electron flow around PSI, and state transitions. PetL is important for photoautotrophic growth as well as for electron transfer efficiency and stability of the cytochrome b6-f complex. The chain is Cytochrome b6-f complex subunit 6 from Pinus mugo (Dwarf mountain pine).